Consider the following 231-residue polypeptide: Large ribosomal subunit protein uL1 (231 aa).

This sequence belongs to the universal ribosomal protein uL1 family. In terms of assembly, part of the 50S ribosomal subunit.

Binds directly to 23S rRNA. The L1 stalk is quite mobile in the ribosome, and is involved in E site tRNA release. Its function is as follows. Protein L1 is also a translational repressor protein, it controls the translation of the L11 operon by binding to its mRNA. This is Large ribosomal subunit protein uL1 from Acidovorax ebreus (strain TPSY) (Diaphorobacter sp. (strain TPSY)).